The primary structure comprises 226 residues: Histone H2B.v1 (226 aa).

The disordered stretch occupies residues 100–130; that stretch reads FNSAKQYPPQPPPAKTATPSSPSSIPAPPIS. A compositionally biased stretch (low complexity) spans 114-123; it reads KTATPSSPSS.

Belongs to the histone H2B family.

This chain is Histone H2B.v1 (H2Bv1), found in Dictyostelium discoideum (Social amoeba).